The sequence spans 276 residues: Diacetylchitobiose uptake system permease protein DasC (276 aa).

Helical transmembrane passes span 14–34, 74–94, 105–125, 137–157, 186–206, and 241–261; these read TAVVLFIGLVFPVYWMFATAF, LIVTVCAVVFSLVIALAGSFA, GFIVGFMLAQMAPWEVMVIAI, SLVPLTLFYMMMILPFTILTL, VILPLLAPGLMSTSMFGFITA, and GATMAASSLFAIPILILFVYL. The region spanning 70-261 is the ABC transmembrane type-1 domain; that stretch reads VSNSLIVTVC…IPILILFVYL (192 aa).

The protein belongs to the binding-protein-dependent transport system permease family. The complex is composed of two ATP-binding proteins (MsiK), two transmembrane proteins (DasB and DasC) and a solute-binding protein (DasA).

It is found in the cell membrane. Its function is as follows. Part of the ABC transporter complex DasABC-MsiK involved in N,N'-diacetylchitobiose ((GlcNAc)2) uptake. Responsible for the translocation of the substrate across the membrane. The protein is Diacetylchitobiose uptake system permease protein DasC of Streptomyces coelicolor (strain ATCC BAA-471 / A3(2) / M145).